We begin with the raw amino-acid sequence, 463 residues long: Fibrinogen beta chain (463 aa).

A compositionally biased stretch (acidic residues) spans 1 to 12 (ASVEYDNEEDSP). The tract at residues 1–56 (ASVEYDNEEDSPQIDARAHRPLDKRQEAAPTLRPVAPPISGTGYQPRPPKQDKQAM) is disordered. Tyr-5 carries the post-translational modification Sulfotyrosine. Residues 16–27 (ARAHRPLDKRQE) show a composition bias toward basic and acidic residues. 2 disulfides stabilise this stretch: Cys-205–Cys-289 and Cys-215–Cys-244. The region spanning 206 to 461 (NIPVVSGREC…KMSMKIKPYF (256 aa)) is the Fibrinogen C-terminal domain. N-linked (GlcNAc...) asparagine glycosylation occurs at Asn-367. 3 residues coordinate Ca(2+): Asp-384, Asp-386, and Trp-388. The cysteines at positions 397 and 410 are disulfide-linked.

Heterohexamer; disulfide linked. Contains 2 sets of 3 non-identical chains (alpha, beta and gamma). The 2 heterotrimers are in head to head conformation with the N-termini in a small central domain. Post-translationally, conversion of fibrinogen to fibrin is triggered by thrombin, which cleaves fibrinopeptides A and B from alpha and beta chains, and thus exposes the N-terminal polymerization sites responsible for the formation of the soft clot. The soft clot is converted into the hard clot by factor XIIIA which catalyzes the epsilon-(gamma-glutamyl)lysine cross-linking between gamma chains (stronger) and between alpha chains (weaker) of different monomers.

The protein localises to the secreted. Its function is as follows. Cleaved by the protease thrombin to yield monomers which, together with fibrinogen alpha (FGA) and fibrinogen gamma (FGG), polymerize to form an insoluble fibrin matrix. Fibrin has a major function in hemostasis as one of the primary components of blood clots. This Gallus gallus (Chicken) protein is Fibrinogen beta chain (FGB).